We begin with the raw amino-acid sequence, 275 residues long: Putative carbamate hydrolase RutD (275 aa).

Belongs to the AB hydrolase superfamily. Hydrolase RutD family.

The enzyme catalyses carbamate + 2 H(+) = NH4(+) + CO2. In terms of biological role, involved in pyrimidine catabolism. May facilitate the hydrolysis of carbamate, a reaction that can also occur spontaneously. This chain is Putative carbamate hydrolase RutD, found in Escherichia coli (strain UTI89 / UPEC).